The primary structure comprises 299 residues: NAD kinase (299 aa).

Catalysis depends on Asp71, which acts as the Proton acceptor. NAD(+)-binding positions include 71–72, 145–146, Arg173, Asp175, 186–191, Ala210, and Gln248; these read DG, ND, and TAYSLS.

The protein belongs to the NAD kinase family. It depends on a divalent metal cation as a cofactor.

It localises to the cytoplasm. It catalyses the reaction NAD(+) + ATP = ADP + NADP(+) + H(+). Its function is as follows. Involved in the regulation of the intracellular balance of NAD and NADP, and is a key enzyme in the biosynthesis of NADP. Catalyzes specifically the phosphorylation on 2'-hydroxyl of the adenosine moiety of NAD to yield NADP. The chain is NAD kinase from Bordetella pertussis (strain Tohama I / ATCC BAA-589 / NCTC 13251).